The chain runs to 282 residues: Shikimate dehydrogenase (NADP(+)) (282 aa).

Shikimate contacts are provided by residues 24 to 26 and threonine 71; that span reads SRS. The Proton acceptor role is filled by lysine 75. Residue aspartate 87 participates in NADP(+) binding. Shikimate contacts are provided by asparagine 96 and aspartate 112. NADP(+) contacts are provided by residues 138–142, 162–167, and leucine 227; these read GAGGA and NRTRIR. Tyrosine 229 is a shikimate binding site. Residue glycine 250 participates in NADP(+) binding.

The protein belongs to the shikimate dehydrogenase family. In terms of assembly, homodimer.

The catalysed reaction is shikimate + NADP(+) = 3-dehydroshikimate + NADPH + H(+). It participates in metabolic intermediate biosynthesis; chorismate biosynthesis; chorismate from D-erythrose 4-phosphate and phosphoenolpyruvate: step 4/7. In terms of biological role, involved in the biosynthesis of the chorismate, which leads to the biosynthesis of aromatic amino acids. Catalyzes the reversible NADPH linked reduction of 3-dehydroshikimate (DHSA) to yield shikimate (SA). The protein is Shikimate dehydrogenase (NADP(+)) of Paracoccus denitrificans (strain Pd 1222).